The following is a 167-amino-acid chain: Putative defense protein Hdd11-like (167 aa).

Positions 1–18 (MMFTYVVAVASVVALTSA) are cleaved as a signal peptide. Residues 19–167 (YPTGAPPSAC…ESAPVKVLSH (149 aa)) enclose the Reelin domain. An intrachain disulfide couples Cys-28 to Cys-105.

Belongs to the insect defense protein family. As to expression, in larvae, high expression in the fat body and low expression in midgut, hemocytes and malpighian tubules. No expression in silkgland.

It localises to the secreted. In terms of biological role, may have antimicrobial activity. This Samia ricini (Indian eri silkmoth) protein is Putative defense protein Hdd11-like.